Consider the following 206-residue polypeptide: dITP/XTP pyrophosphatase (206 aa).

10–15 (SRNAKK) provides a ligand contact to substrate. Catalysis depends on Asp-75, which acts as the Proton acceptor. Asp-75 provides a ligand contact to Mg(2+). Residues Ser-76, 158–161 (FGYD), Lys-181, and 186–187 (HR) each bind substrate.

This sequence belongs to the HAM1 NTPase family. In terms of assembly, homodimer. Mg(2+) serves as cofactor.

The enzyme catalyses XTP + H2O = XMP + diphosphate + H(+). The catalysed reaction is dITP + H2O = dIMP + diphosphate + H(+). It carries out the reaction ITP + H2O = IMP + diphosphate + H(+). In terms of biological role, pyrophosphatase that catalyzes the hydrolysis of nucleoside triphosphates to their monophosphate derivatives, with a high preference for the non-canonical purine nucleotides XTP (xanthosine triphosphate), dITP (deoxyinosine triphosphate) and ITP. Seems to function as a house-cleaning enzyme that removes non-canonical purine nucleotides from the nucleotide pool, thus preventing their incorporation into DNA/RNA and avoiding chromosomal lesions. This chain is dITP/XTP pyrophosphatase, found in Nocardia farcinica (strain IFM 10152).